The primary structure comprises 507 residues: DNA replication licensing factor MCM6 (507 aa).

Residues 32–239 enclose the MCM domain; that stretch reads LYHNLCTSLF…TDYAIARRIV (208 aa). ATP is bound by residues His45, Ser85, Thr86, Ala87, Lys88, Ser89, and Asn190. The Arginine finger motif lies at 214–217; it reads SRFD. Residues Arg305 and Glu308 each contribute to the ADP site. N6-acetyllysine is present on Lys329. The segment at 365–392 is disordered; it reads GPGGINGHADSPAPVNGFNGSGEDASQE. Phosphoserine is present on residues Ser375, Ser390, and Ser448. Thr477 carries the phosphothreonine modification.

This sequence belongs to the MCM family. In terms of assembly, component of the MCM2-7 complex. The complex forms a toroidal hexameric ring with the proposed subunit order MCM2-MCM6-MCM4-MCM7-MCM3-MCM5. Component of the CMG helicase complex, a hexameric ring of related MCM2-7 subunits stabilized by CDC45 and the tetrameric GINS complex. May interact with MCM10. Interacts with TIPIN. Interacts with CDT1. Interacts with MCMBP. Interacts with DDI2. In terms of processing, O-glycosylated (O-GlcNAcylated), in a cell cycle-dependent manner.

It localises to the nucleus. The protein localises to the chromosome. It catalyses the reaction ATP + H2O = ADP + phosphate + H(+). In terms of biological role, acts as a component of the MCM2-7 complex (MCM complex) which is the replicative helicase essential for 'once per cell cycle' DNA replication initiation and elongation in eukaryotic cells. Core component of CDC45-MCM-GINS (CMG) helicase, the molecular machine that unwinds template DNA during replication, and around which the replisome is built. The active ATPase sites in the MCM2-7 ring are formed through the interaction surfaces of two neighboring subunits such that a critical structure of a conserved arginine finger motif is provided in trans relative to the ATP-binding site of the Walker A box of the adjacent subunit. The six ATPase active sites, however, are likely to contribute differentially to the complex helicase activity. This chain is DNA replication licensing factor MCM6 (Mcm6), found in Rattus norvegicus (Rat).